A 425-amino-acid polypeptide reads, in one-letter code: Glutamate-1-semialdehyde 2,1-aminomutase (425 aa).

Residue lysine 265 is modified to N6-(pyridoxal phosphate)lysine.

This sequence belongs to the class-III pyridoxal-phosphate-dependent aminotransferase family. HemL subfamily. Homodimer. Pyridoxal 5'-phosphate serves as cofactor.

It localises to the cytoplasm. It catalyses the reaction (S)-4-amino-5-oxopentanoate = 5-aminolevulinate. It functions in the pathway porphyrin-containing compound metabolism; protoporphyrin-IX biosynthesis; 5-aminolevulinate from L-glutamyl-tRNA(Glu): step 2/2. The protein is Glutamate-1-semialdehyde 2,1-aminomutase of Thiobacillus denitrificans (strain ATCC 25259 / T1).